A 273-amino-acid chain; its full sequence is MTKLIIHLVSDSSVQTAKHAANSALAQFTSIKQKLYHWPMIRNCELLNEVLSKIESKHGIVLYTIADQELRKTLTKFCYELKIPCISVIGKIIKEMSVFSGIEIEKEQNYNYKFDKTYFDTLNAIDYAIRHDDGQMINELSESDIILIGPSRTSKTPTSVFLAYNGLKAANIPYVYNCPFPDFIEKDIDQLVVGLVINPNRLIEIREARLNLLQINENKSYTDFNIVQRECIEVRKICNQRNWPVIDVSTRSIEETAALIMRIYYNRKNKYHK.

Residue Gly-149–Thr-156 participates in ADP binding.

It belongs to the pyruvate, phosphate/water dikinase regulatory protein family. PDRP subfamily.

It catalyses the reaction N(tele)-phospho-L-histidyl/L-threonyl-[pyruvate, phosphate dikinase] + ADP = N(tele)-phospho-L-histidyl/O-phospho-L-threonyl-[pyruvate, phosphate dikinase] + AMP + H(+). The enzyme catalyses N(tele)-phospho-L-histidyl/O-phospho-L-threonyl-[pyruvate, phosphate dikinase] + phosphate + H(+) = N(tele)-phospho-L-histidyl/L-threonyl-[pyruvate, phosphate dikinase] + diphosphate. Its function is as follows. Bifunctional serine/threonine kinase and phosphorylase involved in the regulation of the pyruvate, phosphate dikinase (PPDK) by catalyzing its phosphorylation/dephosphorylation. This chain is Putative pyruvate, phosphate dikinase regulatory protein, found in Rickettsia prowazekii (strain Madrid E).